We begin with the raw amino-acid sequence, 586 residues long: 25S rRNA (adenine-N(1))-methyltransferase (586 aa).

2 disordered regions span residues G23 to L229 and G536 to D573. Positions A25–K41 are enriched in low complexity. Positions L65 to K83 are enriched in basic and acidic residues. Positions K99–N108 are enriched in polar residues. Basic residues predominate over residues N114 to N123. Residues G144–E163 are compositionally biased toward acidic residues. Basic and acidic residues predominate over residues D164–Q182. A compositionally biased stretch (low complexity) spans Q183 to K192. Residues N204–D213 show a composition bias toward polar residues. Residues P217–L229 show a composition bias toward low complexity. Basic and acidic residues predominate over residues V539–K549. The span at N550–P559 shows a compositional bias: basic residues.

It belongs to the methyltransferase superfamily. RRP8 family.

The protein resides in the nucleus. It is found in the nucleolus. Functionally, S-adenosyl-L-methionine-dependent methyltransferase that specifically methylates the N(1) position of a conserved adenine in helix 25.1 in 25S rRNA. Required both for ribosomal 40S and 60S subunits biogenesis. Required for efficient pre-rRNA cleavage at site A2. The chain is 25S rRNA (adenine-N(1))-methyltransferase (RPR8) from Chaetomium thermophilum (strain DSM 1495 / CBS 144.50 / IMI 039719) (Thermochaetoides thermophila).